The chain runs to 135 residues: MCGECYAYLTCIWCKKGLDKVDAKRCHEKKIRIACRNGKHCAVCTSCLENGLYLERSLFPGRPIYPGDLYEPDPWVMFNDIRCMYCGGCLTRDEKERHRLFCEDFWIFRHQVRGRCYLCTRHGSRPPYKETPAAV.

2 zinc fingers span residues 11 to 47 and 83 to 119; these read CIWC…CTSC and CMYC…CYLC.

The protein belongs to the papillomaviridae E6 protein family. As to quaternary structure, forms homodimers. Interacts with ubiquitin-protein ligase UBE3A/E6-AP; this interaction stimulates UBE3A ubiquitin activity. Interacts with host BAK1.

The protein localises to the host cytoplasm. The protein resides in the host nucleus. Its function is as follows. Plays a major role in the induction and maintenance of cellular transformation. E6 associates with host UBE3A/E6-AP ubiquitin-protein ligase and modulates its activity. Protects host keratinocytes from apoptosis by mediating the degradation of host BAK1. May also inhibit host immune response. The sequence is that of Protein E6 from Cervus elaphus (Red deer).